The sequence spans 498 residues: Na(+)/H(+) exchange regulatory cofactor NHE-RF4 (498 aa).

PDZ domains lie at 49-130, 157-235, 263-346, and 394-475; these read FCLL…LAQH, LCHV…AGLE, CLNI…VDPE, and QCFL…GARN. Ser-329 bears the Phosphoserine mark.

As to quaternary structure, interacts with the C-terminal region of GUCY2C. Interacts with C-terminal region of SLC9A3 and the interactions decrease in response to elevated calcium ion levels. Interacts with the C-terminal region of SLC34A1. Interacts with USP2 isoform 2. Interacts (via the third PDZ domain) with SLC26A3 (via PDZ-binding motif). This interaction leads to decreased expression of SLC26A3 on the cell membrane resulting in its reduced exchanger activity. In terms of processing, phosphorylation at Ser-329 negatively regulates its interaction with SLC26A3. As to expression, expressed in kidney and small intestine. Not detected in heart, brain, spleen, lung, liver, skeletal muscle or testis.

It localises to the cell membrane. Its subcellular location is the cytoplasm. Its function is as follows. Acts as a regulatory protein that associates with GUCY2C and negatively modulates its heat-stable enterotoxin-mediated activation. Stimulates SLC9A3 activity in the presence of elevated calcium ions. In Mus musculus (Mouse), this protein is Na(+)/H(+) exchange regulatory cofactor NHE-RF4 (Nherf4).